The following is a 475-amino-acid chain: Dihydrolipoyl dehydrogenase (475 aa).

FAD contacts are provided by residues 39-47 (EKDAYGGTC), Lys56, and Ala118. The cysteines at positions 47 and 52 are disulfide-linked. NAD(+) is bound by residues 186–190 (GGGYI), Glu209, and 275–278 (AVGR). FAD contacts are provided by Asp318 and Ala327. His451 acts as the Proton acceptor in catalysis.

It belongs to the class-I pyridine nucleotide-disulfide oxidoreductase family. Homodimer. Requires FAD as cofactor.

The protein localises to the cytoplasm. The enzyme catalyses N(6)-[(R)-dihydrolipoyl]-L-lysyl-[protein] + NAD(+) = N(6)-[(R)-lipoyl]-L-lysyl-[protein] + NADH + H(+). The sequence is that of Dihydrolipoyl dehydrogenase (lpdA) from Haloferax volcanii (strain ATCC 29605 / DSM 3757 / JCM 8879 / NBRC 14742 / NCIMB 2012 / VKM B-1768 / DS2) (Halobacterium volcanii).